The following is a 206-amino-acid chain: Large ribosomal subunit protein uL4 (206 aa).

The interval 43-78 is disordered; the sequence is ARSGNRKQKDREEVKHTTKKPWRQKGTGRARAGMSS. Positions 49–58 are enriched in basic and acidic residues; sequence KQKDREEVKH. A compositionally biased stretch (basic residues) spans 59–70; the sequence is TTKKPWRQKGTG.

It belongs to the universal ribosomal protein uL4 family. Part of the 50S ribosomal subunit.

In terms of biological role, one of the primary rRNA binding proteins, this protein initially binds near the 5'-end of the 23S rRNA. It is important during the early stages of 50S assembly. It makes multiple contacts with different domains of the 23S rRNA in the assembled 50S subunit and ribosome. Forms part of the polypeptide exit tunnel. The protein is Large ribosomal subunit protein uL4 of Cupriavidus pinatubonensis (strain JMP 134 / LMG 1197) (Cupriavidus necator (strain JMP 134)).